The primary structure comprises 70 residues: Sec-independent protein translocase protein TatA (70 aa).

Residues 1–21 (MGSFSIWHWLIVLVVVLLIFG) form a helical membrane-spanning segment. Positions 46-70 (DAPKISESDKGGHTIDAEVKDKQNS) are disordered.

Belongs to the TatA/E family. As to quaternary structure, the Tat system comprises two distinct complexes: a TatABC complex, containing multiple copies of TatA, TatB and TatC subunits, and a separate TatA complex, containing only TatA subunits. Substrates initially bind to the TatABC complex, which probably triggers association of the separate TatA complex to form the active translocon.

The protein localises to the cell inner membrane. Part of the twin-arginine translocation (Tat) system that transports large folded proteins containing a characteristic twin-arginine motif in their signal peptide across membranes. TatA could form the protein-conducting channel of the Tat system. In Thiobacillus denitrificans (strain ATCC 25259 / T1), this protein is Sec-independent protein translocase protein TatA.